The chain runs to 416 residues: UDP-N-acetylmuramoylalanine--D-glutamate ligase (416 aa).

108–114 (GTTGKTT) contacts ATP.

The protein belongs to the MurCDEF family.

The protein localises to the cytoplasm. The catalysed reaction is UDP-N-acetyl-alpha-D-muramoyl-L-alanine + D-glutamate + ATP = UDP-N-acetyl-alpha-D-muramoyl-L-alanyl-D-glutamate + ADP + phosphate + H(+). Its pathway is cell wall biogenesis; peptidoglycan biosynthesis. In terms of biological role, cell wall formation. Catalyzes the addition of glutamate to the nucleotide precursor UDP-N-acetylmuramoyl-L-alanine (UMA). In Chlamydia trachomatis serovar L2b (strain UCH-1/proctitis), this protein is UDP-N-acetylmuramoylalanine--D-glutamate ligase.